The chain runs to 234 residues: Zinc transport system ATP-binding protein AdcC (234 aa).

Positions 4-234 (ITVEDLSFYY…HENGQEVGHA (231 aa)) constitute an ABC transporter domain. 36 to 43 (GENGAAKT) contributes to the ATP binding site.

This sequence belongs to the ABC transporter superfamily.

Functionally, part of the ATP-driven transport system AdcABC for zinc. Required for transformability. In Streptococcus pneumoniae (strain ATCC BAA-255 / R6), this protein is Zinc transport system ATP-binding protein AdcC (adcC).